The following is a 569-amino-acid chain: Small ribosomal subunit protein bS1 (569 aa).

S1 motif domains are found at residues 52–116 (GAIL…LSRE), 134–199 (GSIV…VSRR), 220–288 (GERR…LGLK), 305–375 (GKRV…LGLK), 392–462 (GLRV…LGVK), and 479–548 (GSDI…LSIK).

The protein belongs to the bacterial ribosomal protein bS1 family.

Its function is as follows. Binds mRNA; thus facilitating recognition of the initiation point. It is needed to translate mRNA with a short Shine-Dalgarno (SD) purine-rich sequence. The polypeptide is Small ribosomal subunit protein bS1 (rpsA) (Chlamydia trachomatis serovar D (strain ATCC VR-885 / DSM 19411 / UW-3/Cx)).